The sequence spans 191 residues: C-type lectin domain family 2 member D (191 aa).

The Cytoplasmic portion of the chain corresponds to 1–38 (MHDSNNVEKDITPSELPANPGCLHSKEHSIKATLIWRL). The chain crosses the membrane as a helical; Signal-anchor for type II membrane protein span at residues 39–59 (FFLIMFLTIIVCGMVAALSAI). The Extracellular portion of the chain corresponds to 60-191 (RANCHQEPSV…WICSKSDIHV (132 aa)). C75 and C86 are oxidised to a cystine. Positions 82–185 (FQRKCFYFSD…HYTERKWICS (104 aa)) constitute a C-type lectin domain. Residues N95 and N147 are each glycosylated (N-linked (GlcNAc...) asparagine). C103 and C184 form a disulfide bridge.

As to quaternary structure, homodimer; disulfide-linked. In terms of processing, N-glycosylated. As to expression, detected in peripheral blood leukocytes, osteoblasts, lymph node, thymus and spleen. Isoform 1, isoform 2 and isoform 4 are expressed in T- and B-lymphocytes, and at lower levels in NK cells. They are also expressed in B-cell lines and LPS-matured monocyte-derived dendritic cells.

The protein resides in the cell membrane. It is found in the endoplasmic reticulum. Receptor for KLRB1 that protects target cells against natural killer cell-mediated lysis. Inhibits osteoclast formation. Inhibits bone resorption. Modulates the release of interferon-gamma. Binds high molecular weight sulfated glycosaminoglycans. This is C-type lectin domain family 2 member D (CLEC2D) from Homo sapiens (Human).